The following is a 576-amino-acid chain: uncharacterized protein (576 aa).

Residues 1–28 form the signal peptide; sequence MLRLNGLRVLLRTLAAIGALLTTASASA. Ser-185 (acyl-ester intermediate) is an active-site residue. 2 disulfide bridges follow: Cys-252–Cys-269 and Cys-278–Cys-286. 4 residues coordinate Ca(2+): Asp-253, Asp-256, Asp-260, and Val-262. Active-site charge relay system residues include Asp-414 and His-464. Cys-529 and Cys-551 are disulfide-bonded.

It belongs to the tannase family.

This is an uncharacterized protein from Xanthomonas campestris pv. campestris (strain ATCC 33913 / DSM 3586 / NCPPB 528 / LMG 568 / P 25).